Here is a 327-residue protein sequence, read N- to C-terminus: L-lactate dehydrogenase (327 aa).

Residues Val-18, Asp-39, Arg-44, Tyr-69, and 83-84 each bind NAD(+); that span reads GL. Residues Gln-86, Arg-92, and 124–127 each bind substrate; that span reads NPVD. NAD(+)-binding positions include 122 to 124 and Ser-147; that span reads AAN. 152–155 is a substrate binding site; it reads DSAR. Residues Arg-157 and His-172 each contribute to the beta-D-fructose 1,6-bisphosphate site. Residue His-179 is the Proton acceptor of the active site. Tyr-224 is modified (phosphotyrosine). Thr-233 is a substrate binding site.

This sequence belongs to the LDH/MDH superfamily. LDH family. In terms of assembly, homotetramer.

It is found in the cytoplasm. It carries out the reaction (S)-lactate + NAD(+) = pyruvate + NADH + H(+). It functions in the pathway fermentation; pyruvate fermentation to lactate; (S)-lactate from pyruvate: step 1/1. With respect to regulation, allosterically activated by fructose 1,6-bisphosphate (FBP). In terms of biological role, catalyzes the conversion of lactate to pyruvate. This chain is L-lactate dehydrogenase, found in Streptococcus suis (strain 98HAH33).